The sequence spans 609 residues: UvrABC system protein C (609 aa).

The region spanning 16–94 is the GIY-YIG domain; the sequence is HLPGVYRHLD…IKSLRPRYNI (79 aa). Residues 203-238 enclose the UVR domain; sequence REVMDEIEARMLQASTELRFEEAAVLRDQMGSLSKV.

It belongs to the UvrC family. Interacts with UvrB in an incision complex.

The protein resides in the cytoplasm. Its function is as follows. The UvrABC repair system catalyzes the recognition and processing of DNA lesions. UvrC both incises the 5' and 3' sides of the lesion. The N-terminal half is responsible for the 3' incision and the C-terminal half is responsible for the 5' incision. In Bordetella bronchiseptica (strain ATCC BAA-588 / NCTC 13252 / RB50) (Alcaligenes bronchisepticus), this protein is UvrABC system protein C.